Reading from the N-terminus, the 217-residue chain is MAKRLLTAFYGGTFDPIHHGHLQPVIALAQLVNLKQVILLPNHIPLHRPLPKATPQQRLRMTRLAIADTPGKLFVIDERELRRNTPSWTVETFKVLRSEYGPMAPLGLIIGQDSLLTLPQWHRSQELFELCHILVCARPGYQYGIAGYKNNNWMEYRFTDDPSALNYQPAGLVYCAETPELAISASDIRGRVHAILPYYDLLTHSVHAYINKQGLYR.

Belongs to the NadD family.

It catalyses the reaction nicotinate beta-D-ribonucleotide + ATP + H(+) = deamido-NAD(+) + diphosphate. It participates in cofactor biosynthesis; NAD(+) biosynthesis; deamido-NAD(+) from nicotinate D-ribonucleotide: step 1/1. Functionally, catalyzes the reversible adenylation of nicotinate mononucleotide (NaMN) to nicotinic acid adenine dinucleotide (NaAD). This Baumannia cicadellinicola subsp. Homalodisca coagulata protein is Probable nicotinate-nucleotide adenylyltransferase.